The sequence spans 698 residues: DNA-directed RNA polymerase subunit beta' (698 aa).

Cysteine 69, cysteine 71, cysteine 89, and cysteine 92 together coordinate Zn(2+). 3 residues coordinate Mg(2+): aspartate 509, aspartate 511, and aspartate 513.

Belongs to the RNA polymerase beta' chain family. RpoC1 subfamily. In terms of assembly, in plastids the minimal PEP RNA polymerase catalytic core is composed of four subunits: alpha, beta, beta', and beta''. When a (nuclear-encoded) sigma factor is associated with the core the holoenzyme is formed, which can initiate transcription. It depends on Mg(2+) as a cofactor. Zn(2+) serves as cofactor.

It is found in the plastid. Its subcellular location is the chloroplast. The enzyme catalyses RNA(n) + a ribonucleoside 5'-triphosphate = RNA(n+1) + diphosphate. Its function is as follows. DNA-dependent RNA polymerase catalyzes the transcription of DNA into RNA using the four ribonucleoside triphosphates as substrates. In Cryptomeria japonica (Japanese cedar), this protein is DNA-directed RNA polymerase subunit beta'.